A 151-amino-acid chain; its full sequence is MDNKDYKKFYLIREDVLPESVVKTLKIKDALKSDPTLSIYDAVKQFDLSRSAFYKYRETIFPVDDKMLDHREFTLILYVTDIVGMLARVLDVISKLELSVLTIHQSIPMEEKATITLSLNAKSKETSVEDVIGALRNLDYVSKVELISMSM.

The ACT domain maps to 74-149 (TLILYVTDIV…YVSKVELISM (76 aa)).

The protein belongs to the UPF0735 family.

The sequence is that of UPF0735 ACT domain-containing protein SAUSA300_1599 from Staphylococcus aureus (strain USA300).